The primary structure comprises 130 residues: Small ribosomal subunit protein uS9 (130 aa).

It belongs to the universal ribosomal protein uS9 family.

The polypeptide is Small ribosomal subunit protein uS9 (Serratia proteamaculans (strain 568)).